The following is a 275-amino-acid chain: Interleukin-2 receptor subunit alpha (275 aa).

An N-terminal signal peptide occupies residues 1 to 21; that stretch reads MEPSLLMWRFFVFIVVPGCVT. A Sushi 1 domain is found at 22–81; sequence EACHDDPPSLRNAMFKVFRYEVGTMINCDCKTGFRRVSAVMRCVGDSSHSAWENRCFCNS. At 22–243 the chain is on the extracellular side; that stretch reads EACHDDPPSL…DTFIFTTEYQ (222 aa). Disulfide bonds link Cys-24–Cys-64, Cys-49–Cys-77, and Cys-51–Cys-79. A glycan (N-linked (GlcNAc...) asparagine) is linked at Asn-80. The interval 88–130 is disordered; that stretch reads QVKQVTPAPEEHREKKHTDAQNQTQPPEEADLPGHCEEPPPWE. Positions 96 to 106 are enriched in basic and acidic residues; that stretch reads PEEHREKKHTD. The N-linked (GlcNAc...) asparagine glycan is linked to Asn-109. Residues 119–130 are compositionally biased toward basic and acidic residues; the sequence is LPGHCEEPPPWE. The 66-residue stretch at 121-186 folds into the Sushi 2 domain; sequence GHCEEPPPWE…WTRPRLKCIR (66 aa). 2 disulfides stabilise this stretch: Cys-123/Cys-168 and Cys-152/Cys-184. The disordered stretch occupies residues 188-221; it reads GEHGQASDDAEPQESTEAPPGSGTFLPTRMAGTT. The chain crosses the membrane as a helical span at residues 244–262; that stretch reads IAVAGCTLLLASILLLSCL. Residues 263 to 275 are Cytoplasmic-facing; it reads TWQRKWKKNRRTI.

As to quaternary structure, non-covalent dimer of an alpha and a beta subunit. IL2R exists in 3 different forms: a high affinity dimer, an intermediate affinity monomer (beta subunit), and a low affinity monomer (alpha subunit). The high and intermediate affinity forms also associate with a gamma subunit.

The protein resides in the membrane. Receptor for interleukin-2. The receptor is involved in the regulation of immune tolerance by controlling regulatory T cells (TREGs) activity. TREGs suppress the activation and expansion of autoreactive T-cells. The chain is Interleukin-2 receptor subunit alpha (IL2RA) from Bos taurus (Bovine).